An 819-amino-acid chain; its full sequence is DNA topoisomerase 4 subunit A (819 aa).

The 467-residue stretch at 30–496 (LPDIRDGLKP…QIIEIDTASL (467 aa)) folds into the Topo IIA-type catalytic domain. The active-site O-(5'-phospho-DNA)-tyrosine intermediate is Tyr118.

This sequence belongs to the type II topoisomerase GyrA/ParC subunit family. ParC type 2 subfamily. In terms of assembly, heterotetramer composed of ParC and ParE.

The protein localises to the cell membrane. It carries out the reaction ATP-dependent breakage, passage and rejoining of double-stranded DNA.. Its function is as follows. Topoisomerase IV is essential for chromosome segregation. It relaxes supercoiled DNA. Performs the decatenation events required during the replication of a circular DNA molecule. This is DNA topoisomerase 4 subunit A from Streptococcus pyogenes serotype M3 (strain SSI-1).